Reading from the N-terminus, the 210-residue chain is Regulator of G-protein signaling 17 (210 aa).

Residues 1–21 (MRKRQQSQNEGTPAVSQAPGN) are disordered. Residues 84–200 (NFDKMMKAPA…LNSQIYKSFV (117 aa)) form the RGS domain. Tyr137 is subject to Phosphotyrosine.

Interacts with GNAI1 and GNAQ. Interacts with GNAZ and GNAI2. Interacts with OPRM1. Forms a complex with mu-opioid receptors and G(alpha)z/i2 subunits, including GNAZ and GNAI2; the formation of this complex results in mu-opioid receptor desensitization. Interacts with HINT1. In terms of processing, N- and O-glycosylated in synapsomal membranes. Serine phosphorylated in synapsomal membranes. Post-translationally, sumoylated with SUMO1 and SUM02 in synaptosomes. The sumoylated forms act as a scaffold for sequestering mu-opioid receptor-activated G(alpha) subunits. Desumoylated by HINT1. As to expression, predominantly expressed in the cerebellum. Also expressed in the cortex and medulla. Weakly expressed in a number of peripheral tissues notably spleen, lung and leukocytes.

It localises to the membrane. The protein resides in the synapse. The protein localises to the synaptosome. Its subcellular location is the nucleus. It is found in the cytoplasm. Regulates G protein-coupled receptor signaling cascades, including signaling via muscarinic acetylcholine receptor CHRM2 and dopamine receptor DRD2. Inhibits signal transduction by increasing the GTPase activity of G protein alpha subunits, thereby driving them into their inactive GDP-bound form. Binds selectively to GNAZ and GNAI2 subunits, accelerates their GTPase activity and regulates their signaling activities. Negatively regulates mu-opioid receptor-mediated activation of the G-proteins. The chain is Regulator of G-protein signaling 17 (RGS17) from Homo sapiens (Human).